A 398-amino-acid polypeptide reads, in one-letter code: Energy-coupling factor transporter ATP-binding protein EcfA2 (398 aa).

An ABC transporter domain is found at 5–240; the sequence is IELKDLEYAY…KELVRRARLK (236 aa). Residue 38-45 coordinates ATP; the sequence is GSNGAGKS.

The protein belongs to the ABC transporter superfamily. Energy-coupling factor EcfA family. As to quaternary structure, forms a stable energy-coupling factor (ECF) transporter complex composed of 2 membrane-embedded substrate-binding proteins (S component), 2 ATP-binding proteins (A component) and 2 transmembrane proteins (T component).

It is found in the cell membrane. ATP-binding (A) component of a common energy-coupling factor (ECF) ABC-transporter complex. Unlike classic ABC transporters this ECF transporter provides the energy necessary to transport a number of different substrates. The chain is Energy-coupling factor transporter ATP-binding protein EcfA2 from Methanospirillum hungatei JF-1 (strain ATCC 27890 / DSM 864 / NBRC 100397 / JF-1).